The sequence spans 155 residues: UPF0178 protein Clos_2709 (155 aa).

The protein belongs to the UPF0178 family.

The polypeptide is UPF0178 protein Clos_2709 (Alkaliphilus oremlandii (strain OhILAs) (Clostridium oremlandii (strain OhILAs))).